The sequence spans 161 residues: Regulator of ribonuclease activity A (161 aa).

Belongs to the RraA family. In terms of assembly, homotrimer. Binds to both RNA-binding sites in the C-terminal region of Rne and to RhlB.

It is found in the cytoplasm. Functionally, globally modulates RNA abundance by binding to RNase E (Rne) and regulating its endonucleolytic activity. Can modulate Rne action in a substrate-dependent manner by altering the composition of the degradosome. Modulates RNA-binding and helicase activities of the degradosome. This chain is Regulator of ribonuclease activity A, found in Cronobacter sakazakii (strain ATCC BAA-894) (Enterobacter sakazakii).